A 365-amino-acid polypeptide reads, in one-letter code: Protein RecA (365 aa).

77-84 contributes to the ATP binding site; sequence GPESSGKT.

This sequence belongs to the RecA family.

It localises to the cytoplasm. Its function is as follows. Can catalyze the hydrolysis of ATP in the presence of single-stranded DNA, the ATP-dependent uptake of single-stranded DNA by duplex DNA, and the ATP-dependent hybridization of homologous single-stranded DNAs. It interacts with LexA causing its activation and leading to its autocatalytic cleavage. The polypeptide is Protein RecA (Mesorhizobium japonicum (strain LMG 29417 / CECT 9101 / MAFF 303099) (Mesorhizobium loti (strain MAFF 303099))).